Consider the following 706-residue polypeptide: Frizzled-6 (706 aa).

The signal sequence occupies residues 1–18; that stretch reads MEMFTFLLTCIFLPLLRG. The region spanning 19–132 is the FZ domain; it reads HSLFTCEPIT…CDRLQYCDET (114 aa). The Extracellular portion of the chain corresponds to 19-201; the sequence is HSLFTCEPIT…SDELEFAKSF (183 aa). Intrachain disulfides connect Cys-24–Cys-85, Cys-32–Cys-78, Cys-69–Cys-106, Cys-95–Cys-129, and Cys-99–Cys-123. Asn-38 is a glycosylation site (N-linked (GlcNAc...) asparagine). A helical transmembrane segment spans residues 202-222; sequence IGTVSIFCLCATLFTFLTFLI. Residues 223–233 are Cytoplasmic-facing; the sequence is DVRRFRYPERP. A helical membrane pass occupies residues 234-254; the sequence is IIYYSVCYSIVSLMYFIGFLL. Topologically, residues 255–284 are extracellular; sequence GDSTACNKADEKLELGDTVVLGSQNKACTV. Residues 285–305 traverse the membrane as a helical segment; that stretch reads LFMLLYFFTMAGTVWWVILTI. At 306–324 the chain is on the cytoplasmic side; it reads TWFLAAGRKWSCEAIEQKA. Residues 325–345 form a helical membrane-spanning segment; sequence VWFHAVAWGTPGFLTVMLLAM. Residues 346 to 370 lie on the Extracellular side of the membrane; the sequence is NKVEGDNISGVCFVGLYDLDASRYF. Asn-352 carries an N-linked (GlcNAc...) asparagine glycan. A helical transmembrane segment spans residues 371-391; it reads VLLPLCLCVFVGLSLLLAGII. The Cytoplasmic segment spans residues 392–416; that stretch reads SLNHVRQVIQHDGRNQEKLKKFMIR. A helical membrane pass occupies residues 417-437; that stretch reads IGVFSGLYLVPLVTLLGCYVY. Topologically, residues 438–473 are extracellular; the sequence is EQVNRITWEITWVSDHCRQYHIPCPYQAKAKARPEL. The chain crosses the membrane as a helical span at residues 474 to 494; the sequence is ALFMIKYLMTLIVGISAVFWV. Topologically, residues 495–706 are cytoplasmic; sequence GSKKTCTEWA…EQGGGCHSDT (212 aa). Positions 498 to 503 match the Lys-Thr-X-X-X-Trp motif, mediates interaction with the PDZ domain of Dvl family members motif; sequence KTCTEW. Residues 588–706 form a disordered region; that stretch reads EIQTSPETSM…EQGGGCHSDT (119 aa). Residues 646–658 show a composition bias toward basic and acidic residues; sequence ARSEGRISPKSDI. Ser-653 carries the post-translational modification Phosphoserine. A compositionally biased stretch (polar residues) spans 662–672; it reads GLAQSNNLQVP. The span at 673–685 shows a compositional bias: low complexity; that stretch reads SSSEPSSLKGSTS. Residues 694 to 706 show a composition bias toward basic and acidic residues; sequence VRKEQGGGCHSDT.

This sequence belongs to the G-protein coupled receptor Fz/Smo family. Interacts with LMBR1L. Ubiquitinated by ZNRF3, leading to its degradation by the proteasome. In terms of tissue distribution, detected in adult heart, brain, placenta, lung, liver, skeletal muscle, kidney, pancreas, thymus, prostate, testis, ovary, small intestine and colon. In the fetus, expressed in brain, lung, liver and kidney.

Its subcellular location is the membrane. The protein resides in the cell membrane. It localises to the cell surface. The protein localises to the apical cell membrane. It is found in the cytoplasmic vesicle membrane. Its subcellular location is the endoplasmic reticulum membrane. Receptor for Wnt proteins. Most of frizzled receptors are coupled to the beta-catenin canonical signaling pathway, which leads to the activation of disheveled proteins, inhibition of GSK-3 kinase, nuclear accumulation of beta-catenin and activation of Wnt target genes. A second signaling pathway involving PKC and calcium fluxes has been seen for some family members, but it is not yet clear if it represents a distinct pathway or if it can be integrated in the canonical pathway, as PKC seems to be required for Wnt-mediated inactivation of GSK-3 kinase. Both pathways seem to involve interactions with G-proteins. May be involved in transduction and intercellular transmission of polarity information during tissue morphogenesis and/or in differentiated tissues. Together with FZD3, is involved in the neural tube closure and plays a role in the regulation of the establishment of planar cell polarity (PCP), particularly in the orientation of asymmetric bundles of stereocilia on the apical faces of a subset of auditory and vestibular sensory cells located in the inner ear. The sequence is that of Frizzled-6 (FZD6) from Homo sapiens (Human).